The primary structure comprises 154 residues: Myoglobin (154 aa).

In terms of domain architecture, Globin spans 2 to 148 (GLSDGEWTLV…FRNDMAAQYK (147 aa)). Residue Ser4 is modified to Phosphoserine. His65 contacts nitrite. Residue His65 participates in O2 binding. Thr68 is subject to Phosphothreonine. His94 is a binding site for heme b.

This sequence belongs to the globin family. Monomeric.

The protein resides in the cytoplasm. Its subcellular location is the sarcoplasm. It catalyses the reaction Fe(III)-heme b-[protein] + nitric oxide + H2O = Fe(II)-heme b-[protein] + nitrite + 2 H(+). It carries out the reaction H2O2 + AH2 = A + 2 H2O. Functionally, monomeric heme protein which primary function is to store oxygen and facilitate its diffusion within muscle tissues. Reversibly binds oxygen through a pentacoordinated heme iron and enables its timely and efficient release as needed during periods of heightened demand. Depending on the oxidative conditions of tissues and cells, and in addition to its ability to bind oxygen, it also has a nitrite reductase activity whereby it regulates the production of bioactive nitric oxide. Under stress conditions, like hypoxia and anoxia, it also protects cells against reactive oxygen species thanks to its pseudoperoxidase activity. This Capra hircus (Goat) protein is Myoglobin.